A 369-amino-acid chain; its full sequence is UDP-N-acetylglucosamine--N-acetylmuramyl-(pentapeptide) pyrophosphoryl-undecaprenol N-acetylglucosamine transferase (369 aa).

UDP-N-acetyl-alpha-D-glucosamine-binding positions include 10-12, Asn-124, Arg-166, Ser-196, and Gln-300; that span reads TGG.

It belongs to the glycosyltransferase 28 family. MurG subfamily.

The protein localises to the cell membrane. The enzyme catalyses di-trans,octa-cis-undecaprenyl diphospho-N-acetyl-alpha-D-muramoyl-L-alanyl-D-glutamyl-meso-2,6-diaminopimeloyl-D-alanyl-D-alanine + UDP-N-acetyl-alpha-D-glucosamine = di-trans,octa-cis-undecaprenyl diphospho-[N-acetyl-alpha-D-glucosaminyl-(1-&gt;4)]-N-acetyl-alpha-D-muramoyl-L-alanyl-D-glutamyl-meso-2,6-diaminopimeloyl-D-alanyl-D-alanine + UDP + H(+). The protein operates within cell wall biogenesis; peptidoglycan biosynthesis. Functionally, cell wall formation. Catalyzes the transfer of a GlcNAc subunit on undecaprenyl-pyrophosphoryl-MurNAc-pentapeptide (lipid intermediate I) to form undecaprenyl-pyrophosphoryl-MurNAc-(pentapeptide)GlcNAc (lipid intermediate II). The protein is UDP-N-acetylglucosamine--N-acetylmuramyl-(pentapeptide) pyrophosphoryl-undecaprenol N-acetylglucosamine transferase of Desulfitobacterium hafniense (strain DSM 10664 / DCB-2).